Reading from the N-terminus, the 212-residue chain is Sentrin-specific protease 8 (212 aa).

The residue at position 1 (Met-1) is an N-acetylmethionine. Residues 11–174 (SLLRQSDVSL…MYVICNTEAL (164 aa)) are protease. Catalysis depends on residues His-102 and Asp-119. Cys-163 functions as the Nucleophile in the catalytic mechanism.

Belongs to the peptidase C48 family. Broadly expressed, with highest levels in kidney and pancreas.

Protease that catalyzes two essential functions in the NEDD8 pathway: processing of full-length NEDD8 to its mature form and deconjugation of NEDD8 from targeted proteins such as cullins or p53. The protein is Sentrin-specific protease 8 (SENP8) of Homo sapiens (Human).